The primary structure comprises 148 residues: UPF0178 protein Pcar_2632 (148 aa).

The protein belongs to the UPF0178 family.

The polypeptide is UPF0178 protein Pcar_2632 (Syntrophotalea carbinolica (strain DSM 2380 / NBRC 103641 / GraBd1) (Pelobacter carbinolicus)).